We begin with the raw amino-acid sequence, 582 residues long: Threonine--tRNA ligase (582 aa).

Residues Asp-185–Pro-478 are catalytic. Residues Cys-278, His-329, and His-455 each contribute to the Zn(2+) site.

It belongs to the class-II aminoacyl-tRNA synthetase family. As to quaternary structure, homodimer. It depends on Zn(2+) as a cofactor.

The protein localises to the cytoplasm. The catalysed reaction is tRNA(Thr) + L-threonine + ATP = L-threonyl-tRNA(Thr) + AMP + diphosphate + H(+). Its function is as follows. Catalyzes the attachment of threonine to tRNA(Thr) in a two-step reaction: L-threonine is first activated by ATP to form Thr-AMP and then transferred to the acceptor end of tRNA(Thr). Also edits incorrectly charged L-seryl-tRNA(Thr). This Dehalococcoides mccartyi (strain ATCC BAA-2266 / KCTC 15142 / 195) (Dehalococcoides ethenogenes (strain 195)) protein is Threonine--tRNA ligase.